We begin with the raw amino-acid sequence, 208 residues long: Ubiquinone biosynthesis protein COQ4 homolog, mitochondrial (208 aa).

Positions 105, 106, 109, and 122 each coordinate Zn(2+).

This sequence belongs to the COQ4 family. In terms of assembly, component of a multi-subunit COQ enzyme complex. Zn(2+) is required as a cofactor.

The protein resides in the mitochondrion inner membrane. The catalysed reaction is a 4-hydroxy-3-methoxy-5-(all-trans-polyprenyl)benzoate + H(+) = a 2-methoxy-6-(all-trans-polyprenyl)phenol + CO2. The protein operates within cofactor biosynthesis; ubiquinone biosynthesis. Its function is as follows. Lyase that catalyzes the C1-decarboxylation of 4-hydroxy-3-methoxy-5-(all-trans-polyprenyl)benzoic acid into 2-methoxy-6-(all-trans-polyprenyl)phenol during ubiquinone biosynthesis. This chain is Ubiquinone biosynthesis protein COQ4 homolog, mitochondrial, found in Nematostella vectensis (Starlet sea anemone).